The chain runs to 710 residues: Cyclomaltodextrin glucanotransferase (710 aa).

A signal peptide spans methionine 1–alanine 27. Ca(2+)-binding residues include aspartate 54, asparagine 56, asparagine 59, asparagine 60, glycine 78, and aspartate 80. A substrate-binding site is contributed by tyrosine 128 to tryptophan 129. Asparagine 167 serves as a coordination point for Ca(2+). Histidine 168 provides a ligand contact to substrate. Isoleucine 218 is a Ca(2+) binding site. Asparagine 221–aspartate 224 is a binding site for substrate. Residue aspartate 227 coordinates Ca(2+). Position 255 (arginine 255) interacts with substrate. Residue aspartate 257 is the Nucleophile of the active site. Lysine 260 to histidine 261 is a binding site for substrate. Residue histidine 261 coordinates Ca(2+). Glutamate 285 serves as the catalytic Proton donor. Residues histidine 355, aspartate 398, and arginine 402 each coordinate substrate. Positions proline 526–isoleucine 603 constitute an IPT/TIG domain. Positions isoleucine 605–glutamine 710 constitute a CBM20 domain.

The protein belongs to the glycosyl hydrolase 13 family. Requires Ca(2+) as cofactor.

It is found in the secreted. It catalyses the reaction Cyclizes part of a (1-&gt;4)-alpha-D-glucan chain by formation of a (1-&gt;4)-alpha-D-glucosidic bond.. Functionally, degrades starch to alpha-, beta-, and gamma-cyclodextrins, as well as linear sugars. In Thermoanaerobacterium thermosulfurigenes (Clostridium thermosulfurogenes), this protein is Cyclomaltodextrin glucanotransferase (amyA).